A 331-amino-acid chain; its full sequence is MTIKVGINGFGRIGRIVFRAAQKRSDIEIVAINDLLDADYMAYMLKYDSTHGRFDGTVEVKDGHLIVNGKKIRVTAERDPANLKWDEVGVDVVAEATGLFLTDETARKHITAGAKKVVMTGPSKDNTPMFVKGANFDKYAGQDIVSNASCTTNCLAPLAKVINDNFGIIEGLMTTVHATTATQKTVDGPSHKDWRGGRGASQNIIPSSTGAAKAVGKVLPELNGKLTGMAFRVPTPNVSVVDLTVRLEKAATYEQIKAAVKAAAEGEMKGVLGYTEDDVVSTDFNGEVCTSVFDAKAGIALNDNFVKLVSWYDNETGYSNKVLDLIAHISK.

NAD(+)-binding positions include 12–13 (RI), aspartate 34, arginine 78, and threonine 120. 2 positions are modified to N6-acetyllysine: lysine 132 and lysine 138. D-glyceraldehyde 3-phosphate-binding positions include 149–151 (SCT) and threonine 180. Residue cysteine 150 is the Nucleophile of the active site. The residue at position 192 (lysine 192) is an N6-acetyllysine. D-glyceraldehyde 3-phosphate-binding positions include 209–210 (TG) and arginine 232. N6-acetyllysine is present on lysine 249. Asparagine 314 is a binding site for NAD(+).

This sequence belongs to the glyceraldehyde-3-phosphate dehydrogenase family. Homotetramer.

It is found in the cytoplasm. It catalyses the reaction D-glyceraldehyde 3-phosphate + phosphate + NAD(+) = (2R)-3-phospho-glyceroyl phosphate + NADH + H(+). It functions in the pathway carbohydrate degradation; glycolysis; pyruvate from D-glyceraldehyde 3-phosphate: step 1/5. Functionally, catalyzes the oxidative phosphorylation of glyceraldehyde 3-phosphate (G3P) to 1,3-bisphosphoglycerate (BPG) using the cofactor NAD. The first reaction step involves the formation of a hemiacetal intermediate between G3P and a cysteine residue, and this hemiacetal intermediate is then oxidized to a thioester, with concomitant reduction of NAD to NADH. The reduced NADH is then exchanged with the second NAD, and the thioester is attacked by a nucleophilic inorganic phosphate to produce BPG. The polypeptide is Glyceraldehyde-3-phosphate dehydrogenase (gapA) (Escherichia coli O6:H1 (strain CFT073 / ATCC 700928 / UPEC)).